The sequence spans 212 residues: Lipid A acyltransferase PagP (212 aa).

The signal sequence occupies residues 1–26; it reads MSSTYFHSSLLAATLFSVTLTAPAFA. Over residues 29–44 the composition is skewed to low complexity; that stretch reads NTQNTPQTITTKKPQP. The tract at residues 29–50 is disordered; that stretch reads NTQNTPQTITTKKPQPAENTFS. Catalysis depends on residues H84, D127, and S128.

It belongs to the lipid A palmitoyltransferase family. As to quaternary structure, homodimer.

The protein resides in the cell outer membrane. It carries out the reaction a lipid A + a 1,2-diacyl-sn-glycero-3-phosphocholine = a hepta-acyl lipid A + a 2-acyl-sn-glycero-3-phosphocholine. The enzyme catalyses a lipid IVA + a 1,2-diacyl-sn-glycero-3-phosphocholine = a lipid IVB + a 2-acyl-sn-glycero-3-phosphocholine. The catalysed reaction is a lipid IIA + a 1,2-diacyl-sn-glycero-3-phosphocholine = a lipid IIB + a 2-acyl-sn-glycero-3-phosphocholine. In terms of biological role, transfers a fatty acid residue from the sn-1 position of a phospholipid to the N-linked hydroxyfatty acid chain on the proximal unit of lipid A or its precursors. The chain is Lipid A acyltransferase PagP from Proteus mirabilis (strain HI4320).